The following is a 43-amino-acid chain: MAKLHDYYKDEVVKQLMSQFDYNSVMQVPRVEKITLNMGVGEA.

Belongs to the universal ribosomal protein uL5 family. As to quaternary structure, part of the 50S ribosomal subunit; part of the 5S rRNA/L5/L18/L25 subcomplex. Contacts the 5S rRNA and the P site tRNA. Forms a bridge to the 30S subunit in the 70S ribosome.

Its function is as follows. This is one of the proteins that bind and probably mediate the attachment of the 5S RNA into the large ribosomal subunit, where it forms part of the central protuberance. In the 70S ribosome it contacts protein S13 of the 30S subunit (bridge B1b), connecting the 2 subunits; this bridge is implicated in subunit movement. Contacts the P site tRNA; the 5S rRNA and some of its associated proteins might help stabilize positioning of ribosome-bound tRNAs. The sequence is that of Large ribosomal subunit protein uL5 (rplE) from Serratia marcescens.